Here is a 923-residue protein sequence, read N- to C-terminus: SPX and EXS domain-containing protein 1 (923 aa).

The SPX domain occupies 1-326 (MKFGKKLRFE…PMNSSIKLDQ (326 aa)). Composition is skewed to low complexity over residues 94–147 (QEQS…QQQQ) and 186–195 (TTTTTTTTTT). 2 disordered regions span residues 94 to 150 (QEQS…QDLK) and 185 to 208 (PTTT…FKNK). The next 9 membrane-spanning stretches (helical) occupy residues 382–402 (LKLG…IILF), 416–436 (FVST…VWLW), 471–491 (ASFL…TVTG), 499–519 (PAQV…FFPF), 529–551 (LLFI…RALF), 591–611 (SIAL…QCIL), 620–640 (IHLG…FSAL), 655–675 (ILWC…DVVV), and 700–720 (WSYY…TLTI). An EXS domain is found at 585-785 (RCNQVNSIAL…KNEVPKVESP (201 aa)). The segment at 793-871 (SSYPYRQDNF…NNSPSGSNSS (79 aa)) is disordered.

The protein belongs to the SYG1 (TC 2.A.94) family.

It is found in the membrane. This chain is SPX and EXS domain-containing protein 1, found in Dictyostelium discoideum (Social amoeba).